We begin with the raw amino-acid sequence, 693 residues long: Triadin (693 aa).

The Cytoplasmic segment spans residues Met-1 to Pro-47. A helical transmembrane segment spans residues Ala-48–Phe-68. Residues Asp-69 to Gln-693 lie on the Lumenal side of the membrane. Residues Glu-117–Asp-130 are compositionally biased toward acidic residues. Disordered stretches follow at residues Glu-117–Glu-260, Gly-278–Pro-649, and Phe-666–Gln-693. Basic and acidic residues-rich tracts occupy residues Lys-131–Pro-241 and Lys-249–Glu-260. Phosphoserine is present on Ser-301. Residues Leu-305–Glu-352 are compositionally biased toward basic and acidic residues. Residues Lys-354 to Ala-364 are compositionally biased toward polar residues. Basic and acidic residues-rich tracts occupy residues Ala-366 to Ile-427 and Gly-438 to Lys-502. An N-linked (GlcNAc...) asparagine glycan is attached at Asn-515. Basic and acidic residues-rich tracts occupy residues Val-526 to Lys-547 and Asp-558 to Asn-579. N-linked (GlcNAc...) asparagine glycosylation occurs at Asn-584. Residues Lys-587–Thr-637 show a composition bias toward basic and acidic residues. Polar residues predominate over residues Pro-672–Gln-693.

Homooligomer of variable subunit number; disulfide-linked. Interacts with CASQ1 and RYR1 in skeletal muscle. Interacts with CASQ2. Post-translationally, phosphorylated by CaMK2. In terms of processing, N-glycosylated. Detected in heart (at protein level). Detected in heart.

Its subcellular location is the sarcoplasmic reticulum membrane. Its function is as follows. Contributes to the regulation of lumenal Ca2+ release via the sarcoplasmic reticulum calcium release channels RYR1 and RYR2, a key step in triggering skeletal and heart muscle contraction. Required for normal organization of the triad junction, where T-tubules and the sarcoplasmic reticulum terminal cisternae are in close contact. Required for normal skeletal muscle strength. Plays a role in excitation-contraction coupling in the heart and in regulating the rate of heart beats. The chain is Triadin from Mus musculus (Mouse).